The sequence spans 325 residues: MQTSLLKPKIIAVESLGENHAKVVMEPFERGYGHTLGNALRRVLLSSMVGYAPTEVTIAGVVHEYSTLDGVQEDVVNLLLNLKGVVFKLHNRDEVTVTLRKEGEGVVTAGDIELAHDCEVINPNHVIAHLSKGGKLDVQIKVEKGRGYVPGNVRRYGDETAKIIGRIVLDASFSPVRRVSYAVESARVEQRTDLDKLVMNIETSGVITPEEAIRQSARILVDQLSVFAALEGTETAAEAPSRAPQIDPILLRPVDDLELTVRSANCLKAENIYYIGDLIQRTENELLKTPNLGRKSLNEIKEVLASRGLTLGMKLENWPPAGLDK.

Positions 1 to 231 (MQTSLLKPKI…DQLSVFAALE (231 aa)) are alpha N-terminal domain (alpha-NTD). The alpha C-terminal domain (alpha-CTD) stretch occupies residues 246-325 (IDPILLRPVD…ENWPPAGLDK (80 aa)).

The protein belongs to the RNA polymerase alpha chain family. As to quaternary structure, homodimer. The RNAP catalytic core consists of 2 alpha, 1 beta, 1 beta' and 1 omega subunit. When a sigma factor is associated with the core the holoenzyme is formed, which can initiate transcription.

The catalysed reaction is RNA(n) + a ribonucleoside 5'-triphosphate = RNA(n+1) + diphosphate. In terms of biological role, DNA-dependent RNA polymerase catalyzes the transcription of DNA into RNA using the four ribonucleoside triphosphates as substrates. In Burkholderia thailandensis (strain ATCC 700388 / DSM 13276 / CCUG 48851 / CIP 106301 / E264), this protein is DNA-directed RNA polymerase subunit alpha.